Consider the following 220-residue polypeptide: Nitrile hydratase subunit beta (220 aa).

This sequence belongs to the nitrile hydratase subunit beta family. Heterodimer of an alpha and a beta chain.

It carries out the reaction an aliphatic primary amide = an aliphatic nitrile + H2O. NHase catalyzes the hydration of various nitrile compounds to the corresponding amides. In Pseudomonas chlororaphis (Pseudomonas aureofaciens), this protein is Nitrile hydratase subunit beta (nthB).